The sequence spans 228 residues: Ribose-5-phosphate isomerase A (228 aa).

Substrate is bound by residues 29–32 (TGST), 85–88 (DGAD), and 98–101 (KGGG). The active-site Proton acceptor is the glutamate 107. Residue lysine 125 participates in substrate binding.

This sequence belongs to the ribose 5-phosphate isomerase family. In terms of assembly, homodimer.

The catalysed reaction is aldehydo-D-ribose 5-phosphate = D-ribulose 5-phosphate. It functions in the pathway carbohydrate degradation; pentose phosphate pathway; D-ribose 5-phosphate from D-ribulose 5-phosphate (non-oxidative stage): step 1/1. Functionally, catalyzes the reversible conversion of ribose-5-phosphate to ribulose 5-phosphate. The polypeptide is Ribose-5-phosphate isomerase A (Staphylococcus aureus (strain MRSA252)).